The primary structure comprises 167 residues: MTCCQTSFCGYPSCSTSGTCGSSCCQPSCCETSCCQPSCCQTSFCGFPSFSTSGTCSSSCCQPSCCETSCCQPSCCQTSSCGTGCGIGGGIGYGQEGSSGAVSTRIRWCRPDCRVEGTCLPPCCVVSCTPPTCCQLHHAEASCCRPSYCGQSCCRPVCCCYSCEPTC.

The protein belongs to the KRTAP type 1 family. As to quaternary structure, interacts with hair keratins. Expressed in the middle/upper portions of the hair cortex, in the region termed the keratogenous zone.

In the hair cortex, hair keratin intermediate filaments are embedded in an interfilamentous matrix, consisting of hair keratin-associated proteins (KRTAP), which are essential for the formation of a rigid and resistant hair shaft through their extensive disulfide bond cross-linking with abundant cysteine residues of hair keratins. The matrix proteins include the high-sulfur and high-glycine-tyrosine keratins. The protein is Keratin-associated protein 1-3 (KRTAP1-3) of Homo sapiens (Human).